We begin with the raw amino-acid sequence, 331 residues long: Phenylalanine--tRNA ligase alpha subunit (331 aa).

E252 is a binding site for Mg(2+).

The protein belongs to the class-II aminoacyl-tRNA synthetase family. Phe-tRNA synthetase alpha subunit type 1 subfamily. As to quaternary structure, tetramer of two alpha and two beta subunits. The cofactor is Mg(2+).

The protein localises to the cytoplasm. It catalyses the reaction tRNA(Phe) + L-phenylalanine + ATP = L-phenylalanyl-tRNA(Phe) + AMP + diphosphate + H(+). This is Phenylalanine--tRNA ligase alpha subunit from Xanthomonas euvesicatoria pv. vesicatoria (strain 85-10) (Xanthomonas campestris pv. vesicatoria).